The sequence spans 565 residues: uncharacterized protein (565 aa).

This is an uncharacterized protein from Acanthamoeba polyphaga mimivirus (APMV).